The primary structure comprises 386 residues: Small ribosomal subunit protein mS31 (386 aa).

This sequence belongs to the mitochondrion-specific ribosomal protein mS31 family. In terms of assembly, component of the mitochondrial ribosome small subunit (28S) which comprises a 12S rRNA and about 30 distinct proteins.

The protein localises to the mitochondrion. This chain is Small ribosomal subunit protein mS31 (MRPS31), found in Bos taurus (Bovine).